Here is a 653-residue protein sequence, read N- to C-terminus: Probable sulfate transporter 3.4 (653 aa).

Over 1–92 (MGHGTNRVED…QYDLKLLRSD (92 aa)) the chain is Cytoplasmic. Residues 93 to 113 (VISGLTIASLAIPQGISYAKL) traverse the membrane as a helical segment. At 114-115 (AN) the chain is on the extracellular side. The helical transmembrane segment at 116-136 (LPPIVGLYSSFVPPLIYAVLG) threads the bilayer. The Cytoplasmic segment spans residues 137–140 (SSRH). A helical membrane pass occupies residues 141-161 (LAVGPVSIASLVMGSMLSESV). Over 162-167 (SPTQDS) the chain is Extracellular. The chain crosses the membrane as a helical span at residues 168 to 188 (ILYLKLAFTSTFFAGVFQASL). Residues 189–194 (GLLRLG) lie on the Cytoplasmic side of the membrane. Residues 195–215 (FMIDFLSKATLIGFTAGAAVI) traverse the membrane as a helical segment. Residues 216 to 247 (VSLQQLKGLLGIVHFTGKMQIVPVMSSVFNHR) lie on the Extracellular side of the membrane. The chain crosses the membrane as a helical span at residues 248-268 (SEWSWETIVMGIGFLSILLTT). Topologically, residues 269–279 (RHISMRKPKLF) are cytoplasmic. Residues 280 to 300 (WISAASPLASVIISTLLVYLI) form a helical membrane-spanning segment. Residues 301–331 (RSKTHAISFIGHLPKGLNPPSLNMLYFSGAH) lie on the Extracellular side of the membrane. A helical membrane pass occupies residues 332–352 (LALAIKTGIITGILSLTEGIA). At 353 to 370 (VGRTFASLKNYQVNGNKE) the chain is on the cytoplasmic side. Residues 371-391 (MMAIGFMNMAGSCTSCYVTTG) form a helical membrane-spanning segment. At 392 to 407 (SFSRSAVNYNAGAKTA) the chain is on the extracellular side. Residues 408–428 (VSNIVMASAVLVTLLFLMPLF) form a helical membrane-spanning segment. The Cytoplasmic portion of the chain corresponds to 429 to 433 (YYTPN). The chain crosses the membrane as a helical span at residues 434 to 454 (VILAAIILTAVIGLIDYQAAY). The Extracellular segment spans residues 455–471 (KLWKVDKFDFFTCLCSF). A helical membrane pass occupies residues 472–492 (FGVLFVSVPLGLAIAVAVSVI). Residues 493–653 (KILLHVTRPN…SSTWKANGQP (161 aa)) lie on the Cytoplasmic side of the membrane. One can recognise an STAS domain in the interval 520–643 (RYREASRIPG…LTVGEAVADL (124 aa)).

This sequence belongs to the SLC26A/SulP transporter (TC 2.A.53) family.

The protein resides in the membrane. Its function is as follows. H(+)/sulfate cotransporter that may play a role in the regulation of sulfate assimilation. In Arabidopsis thaliana (Mouse-ear cress), this protein is Probable sulfate transporter 3.4 (SULTR3;4).